The sequence spans 115 residues: Beta-2-microglobulin (115 aa).

The N-terminal stretch at 1 to 16 (MKIALVLLSLLALTLA) is a signal peptide. In terms of domain architecture, Ig-like C1-type spans 22 to 113 (PPVVKVYTAE…GNPSKKYRLD (92 aa)).

This sequence belongs to the beta-2-microglobulin family. In terms of assembly, heterodimer of an alpha chain and a beta chain. Beta-2-microglobulin is the beta-chain of major histocompatibility complex class I molecules.

The protein resides in the secreted. In terms of biological role, component of the class I major histocompatibility complex (MHC). Involved in the presentation of peptide antigens to the immune system. The protein is Beta-2-microglobulin (b2m) of Xenopus laevis (African clawed frog).